We begin with the raw amino-acid sequence, 491 residues long: Glutamyl-tRNA(Gln) amidotransferase subunit A (491 aa).

Active-site charge relay system residues include Lys-79 and Ser-154. Residue Ser-178 is the Acyl-ester intermediate of the active site.

This sequence belongs to the amidase family. GatA subfamily. Heterotrimer of A, B and C subunits.

It carries out the reaction L-glutamyl-tRNA(Gln) + L-glutamine + ATP + H2O = L-glutaminyl-tRNA(Gln) + L-glutamate + ADP + phosphate + H(+). Allows the formation of correctly charged Gln-tRNA(Gln) through the transamidation of misacylated Glu-tRNA(Gln) in organisms which lack glutaminyl-tRNA synthetase. The reaction takes place in the presence of glutamine and ATP through an activated gamma-phospho-Glu-tRNA(Gln). The sequence is that of Glutamyl-tRNA(Gln) amidotransferase subunit A from Synechococcus sp. (strain CC9902).